Consider the following 29-residue polypeptide: Beta-theraphotoxin-Gr1a (29 aa).

3 disulfides stabilise this stretch: Cys2–Cys16, Cys9–Cys21, and Cys15–Cys25.

The protein belongs to the neurotoxin 30 (phrixotoxin) family. Expressed by the venom gland.

It is found in the secreted. Its function is as follows. Inhibits voltage-gated sodium channels Nav1.1/SCN1A (IC(50)=630 nM), Nav1.2/SCN2A (IC(50)=230 nM), Nav1.3/SCN3A (IC(50)=770 nM), Nav1.4/SCN4A (IC(50)=1290 nM), Nav1.6/SCN8A (IC(50)=630 nM), Nav1.7/SCN9A (IC(50)=15.3-1000 nM) and potassium channels Kv11.1/KCNH2 (IC(50)=4.2 uM). This Grammostola rosea (Chilean rose tarantula) protein is Beta-theraphotoxin-Gr1a.